Consider the following 217-residue polypeptide: Oxygen regulatory protein NreC (217 aa).

Positions 2–119 (KIVIADDHAV…QLISAVRTVY (118 aa)) constitute a Response regulatory domain. Asp-53 is subject to 4-aspartylphosphate. An HTH luxR-type domain is found at 148-213 (TNDPFRILSK…ELVEYALKKK (66 aa)). The segment at residues 172–191 (NKEIAEKLFVSVKTVEAHKT) is a DNA-binding region (H-T-H motif).

Post-translationally, phosphorylated by NreB.

It localises to the cytoplasm. Functionally, member of the two-component regulatory system NreB/NreC involved in the control of dissimilatory nitrate/nitrite reduction in response to oxygen. Phosphorylated NreC binds to a GC-rich palindromic sequence at the promoters of the nitrate (narGHJI) and nitrite (nir) reductase operons, as well as the putative nitrate transporter gene narT, and activates their expression. The polypeptide is Oxygen regulatory protein NreC (nreC) (Staphylococcus carnosus (strain TM300)).